The following is a 490-amino-acid chain: Capsid protein (490 aa).

Residues 79-143 (GETSEEESDS…TQPKTIPGQK (65 aa)) are disordered. Residues 81–94 (TSEEESDSGEEPEF) are compositionally biased toward acidic residues. Over residues 95–111 (EQVRMDRTGGTEIPKEE) the composition is skewed to basic and acidic residues. Positions 122–125 (RKRK) match the Nuclear localization signal motif. Residues 411–428 (CRCWICNIEGHYANECPN) form a CCHC-type zinc finger. The tract at residues 464-490 (YKEEEEETSTEEDDGSSTSEDSDSESD) is disordered. Positions 465–490 (KEEEEETSTEEDDGSSTSEDSDSESD) are enriched in acidic residues.

It belongs to the caulimoviridae capsid protein family. As to quaternary structure, interacts (via nuclear localization signal) with host importin alpha.

Its subcellular location is the virion. The protein resides in the host nucleus. Self assembles to form an icosahedral capsid, about 50 nm in diameter, nm, composed of 420 subunits of the viral capsid protein. The capsid encapsulates the genomic dsDNA. Following virus entry into host cell, provides nuclear import of the viral genome. Virus particles do not enter the nucleus, but dock at the nuclear membrane through the interaction with host importins. This is Capsid protein from Arabidopsis thaliana (Mouse-ear cress).